Here is a 217-residue protein sequence, read N- to C-terminus: RNA chaperone ProQ (217 aa).

The disordered stretch occupies residues 105–166; the sequence is EAKARVQAQR…PREEQHTPVS (62 aa). Positions 121 to 131 are enriched in basic residues; that stretch reads KRERKPRPTTP. Basic and acidic residues predominate over residues 132–162; sequence RRKEGAERKPRAQKPVEKAPKTVKAPREEQH.

The protein belongs to the ProQ family.

It localises to the cytoplasm. In terms of biological role, RNA chaperone with significant RNA binding, RNA strand exchange and RNA duplexing activities. May regulate ProP activity through an RNA-based, post-transcriptional mechanism. This chain is RNA chaperone ProQ, found in Escherichia coli O8 (strain IAI1).